The sequence spans 305 residues: MSAQVMHNRVMGTVKDSASKLVDFLMRHHGQTVLLTGAGVSTDSGIPDYRGPQGIYSRNKDFKPIQYQQFVGPHEFRQRYWARSFLGWPKVSQAQPNASHHAIAALESRSHIAGCITQNVDGLHRRAVVIENPNLLEIHGTLHWVNCISCGYKLQRSAMQEQLQKINPIVYEWQRLNPEKSNADVASSLNPDGDVEIKWDYNHFKYPHCPECNGLLKPNVVFFGENMPMTVRDTSFKMIDDAKALLVVGSSLQVYSALRLVKRAASTGKPIAILNLGFTRGDELAQIRINLGSSAVLEELASTIR.

A mitochondrion-targeting transit peptide spans 1–10 (MSAQVMHNRV). One can recognise a Deacetylase sirtuin-type domain in the interval 11–305 (MGTVKDSASK…VLEELASTIR (295 aa)). NAD(+) contacts are provided by residues 37–57 (GAGV…GIYS) and 118–121 (QNVD). The Proton acceptor role is filled by His139. Zn(2+) is bound by residues Cys147, Cys150, Cys209, and Cys212. Residues 249–251 (GSS), 275–277 (NLG), and Ser293 contribute to the NAD(+) site.

The protein belongs to the sirtuin family. Class II subfamily. It depends on Zn(2+) as a cofactor.

It localises to the mitochondrion matrix. The enzyme catalyses N(6)-acetyl-L-lysyl-[protein] + NAD(+) + H2O = 2''-O-acetyl-ADP-D-ribose + nicotinamide + L-lysyl-[protein]. Its function is as follows. NAD-dependent protein deacylase. Catalyzes the NAD-dependent hydrolysis of acyl groups from lysine residues. The protein is NAD-dependent protein deacylase SIR4 of Batrachochytrium dendrobatidis (strain JAM81 / FGSC 10211) (Frog chytrid fungus).